Consider the following 321-residue polypeptide: Protein ATP1B4 (321 aa).

The interval 1–41 is disordered; sequence MEPGMEMNTASEGGTRRGPENKHEEKVQDPNRGEAETKAEM. Residues 1-72 are Cytoplasmic-facing; sequence MEPGMEMNTA…RTCMGRTAKS (72 aa). Positions 14-41 are enriched in basic and acidic residues; it reads GTRRGPENKHEEKVQDPNRGEAETKAEM. A helical membrane pass occupies residues 73–93; it reads WGLILLFYFIFYTCLAGMFAF. Over 94-321 the chain is Extracellular; that stretch reads CMYVMLLTLS…RIIFTLSIGK (228 aa). 3 N-linked (GlcNAc...) asparagine glycosylation sites follow: Asn132, Asn176, and Asn193. A disulfide bridge links Cys165 with Cys184. Disulfide bonds link Cys194–Cys210 and Cys233–Cys293. N-linked (GlcNAc...) asparagine glycans are attached at residues Asn239, Asn252, and Asn270.

This sequence belongs to the X(+)/potassium ATPases subunit beta family. In terms of assembly, composed of two subunits: alpha (catalytic) and beta (accessory). Post-translationally, glycosylated. As to expression, expressed in skeletal muscle, intestine, heart, brain, retina, inner ear and skin.

The protein localises to the membrane. In terms of biological role, this is the non-catalytic component of the active enzyme, which catalyzes the hydrolysis of ATP coupled with the exchange of Na(+) and K(+) ions across the plasma membrane. The sequence is that of Protein ATP1B4 (ATP1B4) from Gallus gallus (Chicken).